Consider the following 372-residue polypeptide: Sesquiterpene synthase Agr9 (372 aa).

Residues aspartate 87, asparagine 225, serine 229, and glutamate 233 each coordinate Mg(2+). The DDXXD motif signature appears at 87–91 (DEYTD). The (2E,6E)-farnesyl diphosphate site is built by arginine 314 and tyrosine 315.

It belongs to the terpene synthase family. The cofactor is Mg(2+).

The enzyme catalyses (2E,6E)-farnesyl diphosphate = gamma-muurolene + diphosphate. The catalysed reaction is (2E,6E)-farnesyl diphosphate = delta-cadinene + diphosphate. Its function is as follows. Terpene cyclase that catalyzes the cyclization of farnesyl diphosphate (FPP) to various sesquiterpenes, including gamma-muurolene, beta-cadinene and delta-cadinene. The polypeptide is Sesquiterpene synthase Agr9 (Cyclocybe aegerita (Black poplar mushroom)).